We begin with the raw amino-acid sequence, 722 residues long: Neprilysin-1 (722 aa).

Positions 1-17 (MAVALLVALCVVSSRMA) are cleaved as a signal peptide. The 691-residue stretch at 32 to 722 (VCNSPVCQKA…MNPTHKCLLW (691 aa)) folds into the Peptidase M13 domain. Cystine bridges form between cysteine 33-cysteine 38, cysteine 56-cysteine 707, cysteine 64-cysteine 667, cysteine 120-cysteine 378, and cysteine 589-cysteine 719. Residues asparagine 100, asparagine 184, asparagine 207, and asparagine 424 are each glycosylated (N-linked (GlcNAc...) asparagine). Histidine 552 serves as a coordination point for Zn(2+). The active site involves glutamate 553. Histidine 556 is a binding site for Zn(2+). Asparagine 609 carries an N-linked (GlcNAc...) asparagine glycan. A Zn(2+)-binding site is contributed by glutamate 614. The active-site Proton donor is aspartate 618.

Belongs to the peptidase M13 family. The cofactor is Zn(2+). In terms of processing, contains 5 disulfide bonds. In terms of tissue distribution, expressed by the venom gland.

Its subcellular location is the secreted. This is Neprilysin-1 from Trittame loki (Brush-footed trapdoor spider).